Here is a 906-residue protein sequence, read N- to C-terminus: Patched domain-containing protein 3 (906 aa).

The segment at Met-1–Arg-70 is disordered. N-linked (GlcNAc...) asparagine glycans are attached at residues Asn-148 and Asn-235. 11 helical membrane-spanning segments follow: residues Thr-338–Cys-358, Val-370–Leu-390, Leu-392–Val-412, Val-442–Thr-462, Gly-476–Leu-496, Phe-559–Val-579, Val-760–Cys-780, Leu-782–Trp-802, Leu-814–Ser-834, Leu-848–Val-868, and Ile-883–Leu-903. The 158-residue stretch at Val-339 to Leu-496 folds into the SSD domain.

This sequence belongs to the patched family. Expressed in germ cells of the testis (at protein level).

It localises to the cell projection. Its subcellular location is the cilium. The protein resides in the flagellum membrane. It is found in the endoplasmic reticulum membrane. Functionally, may play a role in sperm development or sperm function. However, does not appear to have an essential role in spermatogenesis or male fertility. This Mus musculus (Mouse) protein is Patched domain-containing protein 3 (Ptchd3).